The following is a 190-amino-acid chain: Glucose-6-phosphate isomerase (190 aa).

Positions 89, 91, 98, and 137 each coordinate Fe cation.

The protein belongs to the archaeal-type GPI family. As to quaternary structure, homodimer. Fe cation is required as a cofactor.

It localises to the cytoplasm. The enzyme catalyses alpha-D-glucose 6-phosphate = beta-D-fructose 6-phosphate. It participates in carbohydrate degradation; glycolysis; D-glyceraldehyde 3-phosphate and glycerone phosphate from D-glucose: step 2/4. Its activity is regulated as follows. Inhibited by mannose 6-phosphate, fructose 1-phosphate and fructose 1,6-bisphosphate. Its activity is also inhibited by Cobalt (II) ions &lt; EDTA &lt; nickel (II) ions &lt; zinc (II) ions &lt;&lt; cadmium (II) ions &lt; copper (II) ions. Sodium and potassium ions and manganese ions show little or no effect on activity. The chain is Glucose-6-phosphate isomerase (pgiA) from Thermococcus litoralis.